Here is a 228-residue protein sequence, read N- to C-terminus: PKHD-type hydroxylase RPE_4577 (228 aa).

The 103-residue stretch at 78-180 (TIFPPLFNRY…RIASFFWTQS (103 aa)) folds into the Fe2OG dioxygenase domain. Residues His98, Asp100, and His161 each contribute to the Fe cation site. A 2-oxoglutarate-binding site is contributed by Arg171.

It depends on Fe(2+) as a cofactor. L-ascorbate serves as cofactor.

This chain is PKHD-type hydroxylase RPE_4577, found in Rhodopseudomonas palustris (strain BisA53).